Here is a 503-residue protein sequence, read N- to C-terminus: Cytochrome P450 3A15 (503 aa).

Cys442 contacts heme.

The protein belongs to the cytochrome P450 family. Heme is required as a cofactor.

It localises to the endoplasmic reticulum membrane. It is found in the microsome membrane. The enzyme catalyses an organic molecule + reduced [NADPH--hemoprotein reductase] + O2 = an alcohol + oxidized [NADPH--hemoprotein reductase] + H2O + H(+). Cytochromes P450 are a group of heme-thiolate monooxygenases. In liver microsomes, this enzyme is involved in an NADPH-dependent electron transport pathway. It oxidizes a variety of structurally unrelated compounds, including steroids, fatty acids, and xenobiotics. This chain is Cytochrome P450 3A15 (CYP3A15), found in Cavia porcellus (Guinea pig).